The primary structure comprises 312 residues: Methionyl-tRNA formyltransferase (312 aa).

S111–P114 is a (6S)-5,6,7,8-tetrahydrofolate binding site.

It belongs to the Fmt family.

It carries out the reaction L-methionyl-tRNA(fMet) + (6R)-10-formyltetrahydrofolate = N-formyl-L-methionyl-tRNA(fMet) + (6S)-5,6,7,8-tetrahydrofolate + H(+). In terms of biological role, attaches a formyl group to the free amino group of methionyl-tRNA(fMet). The formyl group appears to play a dual role in the initiator identity of N-formylmethionyl-tRNA by promoting its recognition by IF2 and preventing the misappropriation of this tRNA by the elongation apparatus. This is Methionyl-tRNA formyltransferase from Myxococcus xanthus (strain DK1622).